Reading from the N-terminus, the 953-residue chain is Ubiquitin carboxyl-terminal hydrolase CYLD (953 aa).

Residues 106-590 (CEERLSLFRN…LEIMIGKKKG (485 aa)) form an interaction with TRIP region. CAP-Gly domains lie at 153 to 198 (LAER…VFVA) and 253 to 286 (DVLPGKESLGYFVGVDMDNPIGNWDGRFDGVQLC). The interval 318-350 (FMSRGVGDKGSSSHNKPKVTGSTSDPGSRNRSE) is disordered. Polar residues predominate over residues 327–346 (GSSSHNKPKVTGSTSDPGSR). Phosphoserine is present on Ser384. The tract at residues 387–410 (EMSSDFGHSSPPPQPPSMNSLSSE) is disordered. The interaction with TRAF2 stretch occupies residues 391 to 466 (DFGHSSPPPQ…MPSSSGNAHG (76 aa)). Ser415 and Ser419 each carry phosphoserine. Residues 467–681 (LEVGSLAEVK…FTSEEKDPEE (215 aa)) form an interaction with IKBKG/NEMO region. The CAP-Gly 3 domain maps to 489-532 (GQPPGLSDVLAGLELEDECAGCTDGTFRGTRYFTCALKKALFVK). The 359-residue stretch at 589–947 (KGIQGHYNSC…DAYMCMYQSP (359 aa)) folds into the USP domain. Catalysis depends on Cys598, which acts as the Nucleophile. The B-box stretch occupies residues 778–830 (LEDTPRQCRICGGLAMYECRECYDDPDISAGKIKQFCKTCSTQVHLHPRRLNH). Residues Cys785, Cys788, Cys796, Cys799, Cys814, Cys817, His822, and His830 each contribute to the Zn(2+) site. The active-site Proton acceptor is His868.

This sequence belongs to the peptidase C19 family. Interacts (via CAP-Gly domain) with IKBKG/NEMO (via proline-rich C-terminal region). Interacts with TRAF2 and TRIP. Interacts with PLK1, DVL1, DVL3, MAVS, TBK1, IKKE and RIGI. Interacts (via CAP-Gly domain) with microtubules. Interacts with HDAC6 and BCL3. Interacts with MAP3K7. Identified in a complex with TRAF6 and SQSTM1. Interacts with OPTN and SQSTM1. Interacts with CEP350. Interacts with RNF31; the interaction is indirect and is mediated via SPATA2. Interacts with SPATA2 (via the PUB domain); the interaction is direct and recruits CYLD to the LUBAC complex, thereby regulating TNF-alpha-induced necroptosis. Phosphorylated on several serine residues by IKKA and/or IKKB in response to immune stimuli. Phosphorylation requires IKBKG. Phosphorylation abolishes TRAF2 deubiquitination, interferes with the activation of Jun kinases, and strongly reduces CD40-dependent gene activation by NF-kappa-B. In terms of processing, ubiquitinated. Polyubiquitinated in hepatocytes treated with palmitic acid. Ubiquitination is mediated by E3 ligase TRIM47 and leads to proteasomal degradation.

The protein localises to the cytoplasm. It is found in the perinuclear region. Its subcellular location is the cytoskeleton. It localises to the cell membrane. The protein resides in the microtubule organizing center. The protein localises to the centrosome. It is found in the spindle. Its subcellular location is the cilium basal body. It catalyses the reaction Thiol-dependent hydrolysis of ester, thioester, amide, peptide and isopeptide bonds formed by the C-terminal Gly of ubiquitin (a 76-residue protein attached to proteins as an intracellular targeting signal).. Deubiquitinase that specifically cleaves 'Lys-63'- and linear 'Met-1'-linked polyubiquitin chains and is involved in NF-kappa-B activation and TNF-alpha-induced necroptosis. Negatively regulates NF-kappa-B activation by deubiquitinating upstream signaling factors. Contributes to the regulation of cell survival, proliferation and differentiation via its effects on NF-kappa-B activation. Negative regulator of Wnt signaling. Inhibits HDAC6 and thereby promotes acetylation of alpha-tubulin and stabilization of microtubules. Plays a role in the regulation of microtubule dynamics, and thereby contributes to the regulation of cell proliferation, cell polarization, cell migration, and angiogenesis. Required for normal cell cycle progress and normal cytokinesis. Inhibits nuclear translocation of NF-kappa-B. Plays a role in the regulation of inflammation and the innate immune response, via its effects on NF-kappa-B activation. Dispensable for the maturation of intrathymic natural killer cells, but required for the continued survival of immature natural killer cells. Negatively regulates TNFRSF11A signaling and osteoclastogenesis. Involved in the regulation of ciliogenesis, allowing ciliary basal bodies to migrate and dock to the plasma membrane; this process does not depend on NF-kappa-B activation. Ability to remove linear ('Met-1'-linked) polyubiquitin chains regulates innate immunity and TNF-alpha-induced necroptosis: recruited to the LUBAC complex via interaction with SPATA2 and restricts linear polyubiquitin formation on target proteins. Regulates innate immunity by restricting linear polyubiquitin formation on RIPK2 in response to NOD2 stimulation. Involved in TNF-alpha-induced necroptosis by removing linear ('Met-1'-linked) polyubiquitin chains from RIPK1, thereby regulating the kinase activity of RIPK1. Negatively regulates intestinal inflammation by removing 'Lys-63' linked polyubiquitin chain of NLRP6, thereby reducing the interaction between NLRP6 and PYCARD/ASC and formation of the NLRP6 inflammasome. Does not catalyze deubiquitination of heterotypic 'Lys-63'-/'Lys-48'-linked branched ubiquitin chains. Removes 'Lys-63' linked polyubiquitin chain of MAP3K7, which inhibits phosphorylation and blocks downstream activation of the JNK-p38 kinase cascades. Also removes 'Lys-63'-linked polyubiquitin chains of MAP3K1 and MA3P3K3, which inhibit their interaction with MAP2K1 and MAP2K2. In Rattus norvegicus (Rat), this protein is Ubiquitin carboxyl-terminal hydrolase CYLD (Cyld).